The chain runs to 422 residues: Serine--tRNA ligase (422 aa).

230 to 232 (TAE) contacts L-serine. Position 261 to 263 (261 to 263 (RNE)) interacts with ATP. Glutamate 284 contributes to the L-serine binding site. 347–350 (EVSS) is an ATP binding site. Serine 383 serves as a coordination point for L-serine.

Belongs to the class-II aminoacyl-tRNA synthetase family. Type-1 seryl-tRNA synthetase subfamily. Homodimer. The tRNA molecule binds across the dimer.

Its subcellular location is the cytoplasm. The catalysed reaction is tRNA(Ser) + L-serine + ATP = L-seryl-tRNA(Ser) + AMP + diphosphate + H(+). It carries out the reaction tRNA(Sec) + L-serine + ATP = L-seryl-tRNA(Sec) + AMP + diphosphate + H(+). It functions in the pathway aminoacyl-tRNA biosynthesis; selenocysteinyl-tRNA(Sec) biosynthesis; L-seryl-tRNA(Sec) from L-serine and tRNA(Sec): step 1/1. Functionally, catalyzes the attachment of serine to tRNA(Ser). Is also able to aminoacylate tRNA(Sec) with serine, to form the misacylated tRNA L-seryl-tRNA(Sec), which will be further converted into selenocysteinyl-tRNA(Sec). The protein is Serine--tRNA ligase of Herpetosiphon aurantiacus (strain ATCC 23779 / DSM 785 / 114-95).